The sequence spans 167 residues: Regulatory protein RecX (167 aa).

Residues 19-49 (ESELRRKLASQPFSAKGHWGKQTGRSDNEPV) are disordered.

The protein belongs to the RecX family.

The protein localises to the cytoplasm. Functionally, modulates RecA activity. The polypeptide is Regulatory protein RecX (Yersinia enterocolitica serotype O:8 / biotype 1B (strain NCTC 13174 / 8081)).